The sequence spans 1143 residues: DNA-directed RNA polymerase subunit beta (1143 aa).

Belongs to the RNA polymerase beta chain family. As to quaternary structure, in plastids the minimal PEP RNA polymerase catalytic core is composed of four subunits: alpha, beta, beta', and beta''. When a (nuclear-encoded) sigma factor is associated with the core the holoenzyme is formed, which can initiate transcription.

Its subcellular location is the plastid. The protein localises to the chloroplast. It carries out the reaction RNA(n) + a ribonucleoside 5'-triphosphate = RNA(n+1) + diphosphate. DNA-dependent RNA polymerase catalyzes the transcription of DNA into RNA using the four ribonucleoside triphosphates as substrates. The polypeptide is DNA-directed RNA polymerase subunit beta (Porphyra purpurea (Red seaweed)).